The following is a 274-amino-acid chain: NH(3)-dependent NAD(+) synthetase (274 aa).

46–53 (GISGGQDS) serves as a coordination point for ATP. D52 is a Mg(2+) binding site. Residue R140 coordinates deamido-NAD(+). ATP is bound at residue T160. E165 is a binding site for Mg(2+). Deamido-NAD(+) is bound by residues K173 and D180. ATP contacts are provided by K189 and T211. 260–261 (HK) serves as a coordination point for deamido-NAD(+).

This sequence belongs to the NAD synthetase family. As to quaternary structure, homodimer.

The catalysed reaction is deamido-NAD(+) + NH4(+) + ATP = AMP + diphosphate + NAD(+) + H(+). Its pathway is cofactor biosynthesis; NAD(+) biosynthesis; NAD(+) from deamido-NAD(+) (ammonia route): step 1/1. Catalyzes the ATP-dependent amidation of deamido-NAD to form NAD. Uses ammonia as a nitrogen source. The chain is NH(3)-dependent NAD(+) synthetase from Nocardia farcinica (strain IFM 10152).